Consider the following 200-residue polypeptide: Recombination protein RecR (200 aa).

A C4-type zinc finger spans residues 60–75; it reads CVYCQALTEDDVCNIC. In terms of domain architecture, Toprim spans 83 to 177; it reads TKLCIIESML…KISRIGFGVP (95 aa).

It belongs to the RecR family.

May play a role in DNA repair. It seems to be involved in an RecBC-independent recombinational process of DNA repair. It may act with RecF and RecO. The protein is Recombination protein RecR of Francisella tularensis subsp. tularensis (strain WY96-3418).